We begin with the raw amino-acid sequence, 335 residues long: Large ribosomal subunit protein uL3 (335 aa).

Positions 1 to 20 (MATIHRPRRGSLAFSPRKRA) are disordered.

The protein belongs to the universal ribosomal protein uL3 family. In terms of assembly, part of the 50S ribosomal subunit. Forms a cluster with proteins L14 and L24e.

One of the primary rRNA binding proteins, it binds directly near the 3'-end of the 23S rRNA, where it nucleates assembly of the 50S subunit. The polypeptide is Large ribosomal subunit protein uL3 (Methanothrix thermoacetophila (strain DSM 6194 / JCM 14653 / NBRC 101360 / PT) (Methanosaeta thermophila)).